Consider the following 504-residue polypeptide: Cytochrome P450 71B4 (504 aa).

The helical transmembrane segment at 1–21 (MVSLLSFFLLLLVPIFFLLIF) threads the bilayer. C446 provides a ligand contact to heme.

Belongs to the cytochrome P450 family. Heme serves as cofactor.

It localises to the membrane. The polypeptide is Cytochrome P450 71B4 (CYP71B4) (Arabidopsis thaliana (Mouse-ear cress)).